Reading from the N-terminus, the 336-residue chain is MFLSIMAGVIAFVLTVIAIPRFIKFYQLKKIGGQQMHEDVKQHLAKAGTPTMGGTVFLIVALLVSLIFSIILSKENSGNLGATFGILSVVLIYGIIGFLDDFLKIFKQINEGLTPKQKMSLQLIAGLIFYFVHVLPSGTSAINIFGFYLEVGYLYAFFVLFWVVGFSNAVNLTDGIDGLASISVVISLITYGIIAYNQTQFDILLIIVIMIGALLGFFVFNHKPAKVFMGDVGSLALGAMLAAISIALRQEWTLLFIGFVYVFETSSVMLQVAYFKYTKKKTGVGKRIFRMTPFHHHLELGGVSGKGNKWSEWKVDAFLWAIGIFMSAITLAILYL.

Transmembrane regions (helical) follow at residues 3–23, 52–72, 79–99, 123–143, 144–164, 175–195, 201–221, 227–247, 255–275, and 315–335; these read LSIMAGVIAFVLTVIAIPRFI, MGGTVFLIVALLVSLIFSIIL, NLGATFGILSVVLIYGIIGFL, LIAGLIFYFVHVLPSGTSAIN, IFGFYLEVGYLYAFFVLFWVV, GIDGLASISVVISLITYGIIA, FDILLIIVIMIGALLGFFVFN, VFMGDVGSLALGAMLAAISIA, LFIGFVYVFETSSVMLQVAYF, and VDAFLWAIGIFMSAITLAILY.

It belongs to the glycosyltransferase 4 family. MraY subfamily. Mg(2+) is required as a cofactor.

Its subcellular location is the cell membrane. It carries out the reaction UDP-N-acetyl-alpha-D-muramoyl-L-alanyl-gamma-D-glutamyl-L-lysyl-D-alanyl-D-alanine + di-trans,octa-cis-undecaprenyl phosphate = Mur2Ac(oyl-L-Ala-gamma-D-Glu-L-Lys-D-Ala-D-Ala)-di-trans,octa-cis-undecaprenyl diphosphate + UMP. The protein operates within cell wall biogenesis; peptidoglycan biosynthesis. Its function is as follows. Catalyzes the initial step of the lipid cycle reactions in the biosynthesis of the cell wall peptidoglycan: transfers peptidoglycan precursor phospho-MurNAc-pentapeptide from UDP-MurNAc-pentapeptide onto the lipid carrier undecaprenyl phosphate, yielding undecaprenyl-pyrophosphoryl-MurNAc-pentapeptide, known as lipid I. The chain is Phospho-N-acetylmuramoyl-pentapeptide-transferase from Streptococcus agalactiae serotype Ia (strain ATCC 27591 / A909 / CDC SS700).